Reading from the N-terminus, the 186-residue chain is MNVLSIMDDLKRRMDGAISAFQHELGGLRTGRASASLLEPLTVEAYGSVVHINQVANISVPEPRMLSVSVWDKTMVGAVERAIRDSGLGLNPITDGMNLRIPLPELNEERRKELVKIAHQYAEQARVATRHVRRDGMDNLKKLEKEGEISQDEAHGLSEKVQKLTDETIANIDKILAVKESEIMHV.

It belongs to the RRF family.

Its subcellular location is the cytoplasm. In terms of biological role, responsible for the release of ribosomes from messenger RNA at the termination of protein biosynthesis. May increase the efficiency of translation by recycling ribosomes from one round of translation to another. This chain is Ribosome-recycling factor, found in Bartonella quintana (strain Toulouse) (Rochalimaea quintana).